The primary structure comprises 426 residues: Crinkler effector protein 4 (426 aa).

The interval 20 to 57 (VEIDDSAKVSKLKKVIKEENPATITCDAKDLQLFLAKK) is LQLFLAK domain. The interval 59-107 (DAWLDGAGAAAVELDEHGHPQGCVQMDPTLWVKNPKHFGDNFQPGEGQV) is DWL domain. Residues 108-114 (HVLVVVP) carry the HVLVXXP motif motif. Residues 115 to 426 (EGVVGSASET…RSIPTLSYFS (312 aa)) are effector domain.

It belongs to the Crinkler effector family.

The protein localises to the secreted. It localises to the host nucleus. In terms of biological role, secreted effector that is critical to pathogenesis by suppressing plant immune responsess. Promotes Phytophthora infection by suppressing the H(2)O(2) accumulation and callose deposition. May induce cell death by regulating expression of cell death-related genes. The protein is Crinkler effector protein 4 of Phytophthora capsici.